The following is a 254-amino-acid chain: C-X-C motif chemokine 16 (254 aa).

The first 29 residues, 1–29, serve as a signal peptide directing secretion; the sequence is MGRDLRPGSRVLLLLLLLLLVYLTQPGNG. Residues 30-205 are Extracellular-facing; it reads NEGSVTGSCY…AGPTARTSAT (176 aa). Positions 32 to 107 are chemokine; that stretch reads GSVTGSCYCG…DLKECGHAYS (76 aa). 2 disulfides stabilise this stretch: Cys-38/Cys-68 and Cys-40/Cys-82. The segment at 146–165 is disordered; the sequence is QSTQRPTLPVGSLSSDKELT. N-linked (GlcNAc...) asparagine glycosylation is present at Asn-168. Positions 178–200 are disordered; the sequence is SLAAGPEAGENQKQPEKNAGPTA. The chain crosses the membrane as a helical span at residues 206–226; sequence VPVLCLLAIIFILTAALSYVL. Topologically, residues 227 to 254 are cytoplasmic; that stretch reads CKRRRGQSPQSSPDLPVHYIPVAPDSNT. Residues 231–254 form a disordered region; that stretch reads RGQSPQSSPDLPVHYIPVAPDSNT.

It belongs to the intercrine alpha (chemokine CxC) family. Glycosylated. As to expression, expressed in T-cell areas. Expressed in spleen, lymph nodes, lung, kidney, small intestine and thymus. Weak expression in heart and liver and no expression in brain and bone marrow.

It localises to the cell membrane. The protein localises to the secreted. Its function is as follows. Acts as a scavenger receptor on macrophages, which specifically binds to OxLDL (oxidized low density lipoprotein), suggesting that it may be involved in pathophysiology such as atherogenesis. Induces a strong chemotactic response. Induces calcium mobilization. Binds to CXCR6/Bonzo. The polypeptide is C-X-C motif chemokine 16 (CXCL16) (Homo sapiens (Human)).